An 81-amino-acid chain; its full sequence is Protein I5 homolog (81 aa).

The next 2 helical transmembrane spans lie at 8–28 (LITI…FSLV) and 53–73 (MEIF…AAYI).

It belongs to the Chordopoxvirinae I5 family.

It localises to the virion membrane. The polypeptide is Protein I5 homolog (Vertebrata (FPV)).